The sequence spans 628 residues: tRNA (carboxymethyluridine(34)-5-O)-methyltransferase alkbh8 (628 aa).

Positions 43-123 (QSLVVANGGL…ITLYLSFVEK (81 aa)) constitute an RRM domain. Residues 218-335 (DPDQLTINQY…RTSFTFRKVR (118 aa)) form the Fe2OG dioxygenase domain. 2-oxoglutarate is bound at residue 225 to 227 (NQY). Fe cation is bound by residues H236 and D238. Position 240 (H240) interacts with Zn(2+). H290 provides a ligand contact to Fe cation. The 2-oxoglutarate site is built by R326 and R332. The Zn(2+) site is built by C339, C341, and C347. The interval 410-628 (ADVGCGNGKY…GNWCVILEKL (219 aa)) is methyltransferase domain. The segment at 563-582 (PTNKSKVTPENKEQNEKEHG) is disordered. Basic and acidic residues predominate over residues 569–582 (VTPENKEQNEKEHG).

This sequence belongs to the alkB family. It depends on Fe(2+) as a cofactor.

The protein resides in the cytoplasm. It is found in the nucleus. It carries out the reaction 5-(carboxymethyl)uridine(34) in tRNA + S-adenosyl-L-methionine = 5-(2-methoxy-2-oxoethyl)uridine(34) in tRNA + S-adenosyl-L-homocysteine. Functionally, catalyzes the methylation of 5-carboxymethyl uridine to 5-methylcarboxymethyl uridine at the wobble position of the anticodon loop in tRNA via its methyltransferase domain. Catalyzes the last step in the formation of 5-methylcarboxymethyl uridine at the wobble position of the anticodon loop in target tRNA. Has a preference for tRNA(Arg) and tRNA(Glu), and does not bind tRNA(Lys). Binds tRNA and catalyzes the iron and alpha-ketoglutarate dependent hydroxylation of 5-methylcarboxymethyl uridine at the wobble position of the anticodon loop in tRNA via its dioxygenase domain, giving rise to 5-(S)-methoxycarbonylhydroxymethyluridine; has a preference for tRNA(Gly). Required for normal survival after DNA damage. May inhibit apoptosis and promote cell survival and angiogenesis. This is tRNA (carboxymethyluridine(34)-5-O)-methyltransferase alkbh8 (alkbh8) from Xenopus tropicalis (Western clawed frog).